We begin with the raw amino-acid sequence, 440 residues long: 3-phosphoshikimate 1-carboxyvinyltransferase (440 aa).

3-phosphoshikimate contacts are provided by lysine 26, serine 27, and arginine 31. Position 26 (lysine 26) interacts with phosphoenolpyruvate. The phosphoenolpyruvate site is built by glycine 100 and arginine 134. 3-phosphoshikimate-binding residues include serine 180, serine 181, glutamine 182, serine 208, aspartate 323, asparagine 346, and lysine 350. Residue glutamine 182 coordinates phosphoenolpyruvate. The active-site Proton acceptor is aspartate 323. Phosphoenolpyruvate is bound by residues arginine 354, arginine 398, and lysine 423.

This sequence belongs to the EPSP synthase family. As to quaternary structure, monomer.

It localises to the cytoplasm. It carries out the reaction 3-phosphoshikimate + phosphoenolpyruvate = 5-O-(1-carboxyvinyl)-3-phosphoshikimate + phosphate. Its pathway is metabolic intermediate biosynthesis; chorismate biosynthesis; chorismate from D-erythrose 4-phosphate and phosphoenolpyruvate: step 6/7. Catalyzes the transfer of the enolpyruvyl moiety of phosphoenolpyruvate (PEP) to the 5-hydroxyl of shikimate-3-phosphate (S3P) to produce enolpyruvyl shikimate-3-phosphate and inorganic phosphate. The sequence is that of 3-phosphoshikimate 1-carboxyvinyltransferase from Pasteurella multocida (strain Pm70).